Reading from the N-terminus, the 411-residue chain is NADH-quinone oxidoreductase subunit D (411 aa).

It belongs to the complex I 49 kDa subunit family. In terms of assembly, NDH-1 is composed of 14 different subunits. Subunits NuoB, C, D, E, F, and G constitute the peripheral sector of the complex.

The protein resides in the cell inner membrane. It carries out the reaction a quinone + NADH + 5 H(+)(in) = a quinol + NAD(+) + 4 H(+)(out). Functionally, NDH-1 shuttles electrons from NADH, via FMN and iron-sulfur (Fe-S) centers, to quinones in the respiratory chain. The immediate electron acceptor for the enzyme in this species is believed to be ubiquinone. Couples the redox reaction to proton translocation (for every two electrons transferred, four hydrogen ions are translocated across the cytoplasmic membrane), and thus conserves the redox energy in a proton gradient. This Phenylobacterium zucineum (strain HLK1) protein is NADH-quinone oxidoreductase subunit D.